The chain runs to 425 residues: MFPPARGKELLSFEDVAMYFTREEWGHLNWGQKDLYRDVMLENYRNMVLLGFQFPKPEMICQLENWDEQWILDLPRTGNRKASGSACPGSEARHKMKKLTPKQKFSEDLESYKISVVMQESAEKLSEKLHKCKEFVDSCRLTFPTSGDEYSRGFLQNLNLIQDQNAQTRWKQGRYDEDGKPFNQRSLLLGHERILTRAKSYECSECGKVIRRKAWFDQHQRIHFLENPFECKVCGQAFRQRSALTVHKQCHLQNKPYRCHDCGKCFRQLAYLVEHKRIHTKEKPYKCSKCEKTFSQNSTLIRHQVIHSGEKRHKCLECGKAFGRHSTLLCHQQIHSKPNTHKCSECGQSFGRNVDLIQHQRIHTKEEFFQCGECGKTFSFKRNLFRHQVIHTGSQPYQCVICGKSFKWHTSFIKHQGTHKGQIST.

Positions 11–82 constitute a KRAB domain; the sequence is LSFEDVAMYF…DLPRTGNRKA (72 aa). C2H2-type zinc fingers lie at residues 201-223, 229-251, 257-279, 285-307, 313-335, 341-363, 369-391, and 397-419; these read YECS…QRIH, FECK…KQCH, YRCH…KRIH, YKCS…QVIH, HKCL…QQIH, HKCS…QRIH, FQCG…QVIH, and YQCV…QGTH.

It belongs to the krueppel C2H2-type zinc-finger protein family.

It is found in the nucleus. In terms of biological role, may be involved in transcriptional regulation. In Homo sapiens (Human), this protein is Zinc finger protein 789 (ZNF789).